Consider the following 155-residue polypeptide: FAD synthase (155 aa).

ATP contacts are provided by residues 9–10, 14–17, and Asp-92; these read TF and HPGH.

Belongs to the archaeal FAD synthase family. In terms of assembly, homodimer. Requires a divalent metal cation as cofactor.

It catalyses the reaction FMN + ATP + H(+) = FAD + diphosphate. The protein operates within cofactor biosynthesis; FAD biosynthesis; FAD from FMN: step 1/1. Its function is as follows. Catalyzes the transfer of the AMP portion of ATP to flavin mononucleotide (FMN) to produce flavin adenine dinucleotide (FAD) coenzyme. The polypeptide is FAD synthase (Archaeoglobus profundus (strain DSM 5631 / JCM 9629 / NBRC 100127 / Av18)).